Consider the following 159-residue polypeptide: Protein-export protein SecB (159 aa).

The protein belongs to the SecB family. In terms of assembly, homotetramer, a dimer of dimers. One homotetramer interacts with 1 SecA dimer.

The protein localises to the cytoplasm. Its function is as follows. One of the proteins required for the normal export of preproteins out of the cell cytoplasm. It is a molecular chaperone that binds to a subset of precursor proteins, maintaining them in a translocation-competent state. It also specifically binds to its receptor SecA. The sequence is that of Protein-export protein SecB from Burkholderia mallei (strain NCTC 10229).